The sequence spans 221 residues: UPF0502 protein VSAL_II0605 (221 aa).

It belongs to the UPF0502 family.

This chain is UPF0502 protein VSAL_II0605, found in Aliivibrio salmonicida (strain LFI1238) (Vibrio salmonicida (strain LFI1238)).